The following is a 687-amino-acid chain: Ribosomal RNA processing protein 1 homolog (687 aa).

The segment covering 288–298 (DEEDDEVNAEE) has biased composition (acidic residues). Disordered regions lie at residues 288–312 (DEEDDEVNAEEEQPRATSLDPRAGN) and 463–624 (VKEA…GSGK). Composition is skewed to basic and acidic residues over residues 463–488 (VKEAEPKSKKAKKEEPPQQNKDDQTK), 497–520 (PKNDQSKPKIEDQPTLKAEKEEPA), and 527–543 (HSKTKEEQSKPKTDEQP). Positions 554–564 (KAKPTPKTKAA) are enriched in low complexity. Over residues 596–608 (KQANSKLPQSTPK) the composition is skewed to polar residues. A phosphothreonine mark is found at threonine 617 and threonine 620. At serine 622 the chain carries Phosphoserine.

This sequence belongs to the RRP1 family.

It localises to the nucleus. Functionally, may be involved in the generation of 28S rRNA. The chain is Ribosomal RNA processing protein 1 homolog (Nnp-1) from Drosophila melanogaster (Fruit fly).